The sequence spans 84 residues: Anthracycline acyl carrier protein DpsG (84 aa).

The 78-residue stretch at Glu-3 to Leu-80 folds into the Carrier domain. At Ser-40 the chain carries O-(pantetheine 4'-phosphoryl)serine.

It participates in antibiotic biosynthesis; daunorubicin biosynthesis. Its pathway is antibiotic biosynthesis; carminomycin biosynthesis. The protein operates within antibiotic biosynthesis; rhodomycin biosynthesis. It functions in the pathway antibiotic biosynthesis; aclacinomycin biosynthesis. Involved in the biosynthesis of aklanonate which is an important precursor common to the formation of the clinically significant anthracyclines such as carminomycin, daunorubicin (daunomycin), rhodomycin, aclacinomycin T (aklavin) and aclacinomycin A (aclarubicin). These compounds are aromatic polyketide antibiotics that exhibit high cytotoxicity and are widely applied in the chemotherapy of a variety of cancers. This Streptomyces peucetius protein is Anthracycline acyl carrier protein DpsG (dpsG).